Reading from the N-terminus, the 277-residue chain is Adaptin ear-binding coat-associated protein 1 (277 aa).

Residues 164 to 277 are disordered; it reads GNITAKKGGT…APQPSNWVQF (114 aa). A compositionally biased stretch (pro residues) spans 187–201; the sequence is LPPPPGGKVTIPPPS. Thr211 carries the post-translational modification Phosphothreonine. A compositionally biased stretch (low complexity) spans 222–234; sequence SNDSDILLDLDSP. A compositionally biased stretch (pro residues) spans 235-245; that stretch reads APVPTSAPAPA. 2 consecutive short sequence motifs (WXXF motif) follow at residues 254–257 and 274–277; these read WGDF and WVQF. Over residues 258–277 the composition is skewed to polar residues; the sequence is STASSSVPNQAPQPSNWVQF.

This sequence belongs to the NECAP family. As to quaternary structure, interacts with AP1G1 and AP2A1 components of the adapter protein complexes AP-1 and AP-2. Interacts with the GAE domain proteins GGA1, GGA2 and GGA3. Interacts with AP2A2. In terms of tissue distribution, expressed predominantly in brain (at protein level).

The protein localises to the cytoplasmic vesicle. Its subcellular location is the clathrin-coated vesicle membrane. It is found in the cell membrane. Functionally, involved in endocytosis. The chain is Adaptin ear-binding coat-associated protein 1 (Necap1) from Rattus norvegicus (Rat).